Here is a 128-residue protein sequence, read N- to C-terminus: Small ribosomal subunit protein uS14m (128 aa).

The protein belongs to the universal ribosomal protein uS14 family. As to quaternary structure, component of the mitochondrial ribosome small subunit (28S) which comprises a 12S rRNA and about 30 distinct proteins. Interacts with LIAT1.

It localises to the mitochondrion. This is Small ribosomal subunit protein uS14m (Mrps14) from Mus musculus (Mouse).